A 139-amino-acid polypeptide reads, in one-letter code: Nucleoside diphosphate kinase (139 aa).

ATP-binding residues include Lys10, Phe58, Arg86, Thr92, Arg104, and Asn114. His117 functions as the Pros-phosphohistidine intermediate in the catalytic mechanism.

This sequence belongs to the NDK family. In terms of assembly, homotetramer. Mg(2+) is required as a cofactor.

The protein resides in the cytoplasm. The catalysed reaction is a 2'-deoxyribonucleoside 5'-diphosphate + ATP = a 2'-deoxyribonucleoside 5'-triphosphate + ADP. It carries out the reaction a ribonucleoside 5'-diphosphate + ATP = a ribonucleoside 5'-triphosphate + ADP. Major role in the synthesis of nucleoside triphosphates other than ATP. The ATP gamma phosphate is transferred to the NDP beta phosphate via a ping-pong mechanism, using a phosphorylated active-site intermediate. The chain is Nucleoside diphosphate kinase from Rhodococcus jostii (strain RHA1).